A 207-amino-acid chain; its full sequence is Ribosomal RNA small subunit methyltransferase G (207 aa).

Residues glycine 73, leucine 78, 124 to 125 (VE), and arginine 139 each bind S-adenosyl-L-methionine.

It belongs to the methyltransferase superfamily. RNA methyltransferase RsmG family.

Its subcellular location is the cytoplasm. It catalyses the reaction guanosine(527) in 16S rRNA + S-adenosyl-L-methionine = N(7)-methylguanosine(527) in 16S rRNA + S-adenosyl-L-homocysteine. Functionally, specifically methylates the N7 position of guanine in position 527 of 16S rRNA. In Escherichia coli O17:K52:H18 (strain UMN026 / ExPEC), this protein is Ribosomal RNA small subunit methyltransferase G.